Here is a 333-residue protein sequence, read N- to C-terminus: Potassium channel protein 1 (333 aa).

At 1–6 (METYEK) the chain is on the cytoplasmic side. Residues 7–27 (IELGIIVIILLILIESVILMT) form a helical membrane-spanning segment. At 28 to 60 (VEGWDFFTAFYTAVVTISTVGYGDYTPQTFLGK) the chain is on the extracellular side. Residues 46–51 (TVGYGD) carry the Selectivity filter motif. A helical membrane pass occupies residues 61-81 (LSVIIYIFAGVGAVAYTMGNI). The Cytoplasmic portion of the chain corresponds to 82–333 (ASFFIEGHFR…KLKRYVEGVE (252 aa)). Residues 107 to 229 (NNHYIICGYG…GADRAVCPYI (123 aa)) form the RCK N-terminal domain. In terms of domain architecture, RCK C-terminal spans 246–331 (EFIHSLVATE…LEKLKRYVEG (86 aa)).

Homotetramer.

Its subcellular location is the cell membrane. Functionally, potassium channel protein. Seems to conduct potassium at low membrane potentials. The polypeptide is Potassium channel protein 1 (Methanocaldococcus jannaschii (strain ATCC 43067 / DSM 2661 / JAL-1 / JCM 10045 / NBRC 100440) (Methanococcus jannaschii)).